Here is a 397-residue protein sequence, read N- to C-terminus: Serpin-Z7 (397 aa).

Residue A2 is modified to N-acetylalanine. The segment at 344 to 368 (GTKAGAATGDVIVDRSLPIRMDFVA) is RCL.

It belongs to the serpin family. Highly expressed in endosperm, at intermediate level in embryo and at lower levels in roots.

Inhibits chymotrypsin in vitro. This is Serpin-Z7 (PAZ7) from Hordeum vulgare (Barley).